The following is a 271-amino-acid chain: Exosome complex component Rrp42 (271 aa).

This sequence belongs to the RNase PH family. Rrp42 subfamily. Component of the archaeal exosome complex. Forms a hexameric ring-like arrangement composed of 3 Rrp41-Rrp42 heterodimers. The hexameric ring associates with a trimer of Rrp4 and/or Csl4 subunits.

The protein resides in the cytoplasm. Functionally, non-catalytic component of the exosome, which is a complex involved in RNA degradation. Contributes to the structuring of the Rrp41 active site. The sequence is that of Exosome complex component Rrp42 from Methanothermobacter thermautotrophicus (strain ATCC 29096 / DSM 1053 / JCM 10044 / NBRC 100330 / Delta H) (Methanobacterium thermoautotrophicum).